We begin with the raw amino-acid sequence, 1230 residues long: Serine/threonine-protein kinase PDK1 (1230 aa).

The interval 1–277 is disordered; that stretch reads MASSHFGPAS…ASSGALKKHS (277 aa). Low complexity predominate over residues 34-50; the sequence is SSSSSSRSTTTCSSTSS. Over residues 62–76 the composition is skewed to polar residues; sequence ETSTAATSRSQLPSN. The span at 77-87 shows a compositional bias: basic and acidic residues; sequence RHSENEAEHDT. Composition is skewed to polar residues over residues 107–117 and 140–175; these read PRSNRLGTSPQ and SKRQSNTETVSGTSPSTPLGKSFLAQQDLSPNSSTI. Residues 185 to 202 show a composition bias toward basic and acidic residues; sequence PNDRLSHDRESHSAERPR. The span at 217-226 shows a compositional bias: polar residues; sequence STPSSPTNSY. Over residues 252 to 262 the composition is skewed to basic and acidic residues; that stretch reads ARDGDDRERRQ. The 521-residue stretch at 281–801 folds into the Protein kinase domain; the sequence is WVLGEELGVG…ITFIKTHPFF (521 aa). ATP-binding positions include 291 to 293 and Lys319; that span reads SYS. Disordered regions lie at residues 345 to 522 and 534 to 597; these read LSDP…RSGA and TLPP…KMSA. 2 stretches are compositionally biased toward polar residues: residues 378–397 and 408–433; these read TASIGGQSSMASVSGGTVSN and IVTTSSAASSPVLTASSGSTQLSPTA. Basic and acidic residues-rich tracts occupy residues 466–494 and 502–521; these read GGEDGKDGQDGQETPSREWDRDRDWDNMT and VREESAEGGEKEKDEEERSG. Residues 535–544 are compositionally biased toward pro residues; the sequence is LPPPQIPSTP. The segment covering 555–569 has biased composition (basic and acidic residues); the sequence is DGHRTSRETPRDRPH. Residues 621–623 and Glu627 contribute to the ATP site; that span reads SLA. Asp666 functions as the Proton acceptor in the catalytic mechanism. Positions 670 and 684 each coordinate ATP. Residues 850–859 are compositionally biased toward acidic residues; it reads EDEDGFEYDA. 4 disordered regions span residues 850 to 871, 907 to 955, 972 to 1035, and 1116 to 1152; these read EDEDGFEYDADTVSPRPEGGAV, LGED…GGNR, GGGM…SDEA, and EADGDPAGSDSGAGLSSSSHVESGGGGVGGGGRGGGH. Residues 927–942 show a composition bias toward basic and acidic residues; that stretch reads GKREKEVEKKKGEKAR. 3 stretches are compositionally biased toward low complexity: residues 977 to 992, 1002 to 1030, and 1120 to 1137; these read GSATSVAASDTVRTPG, RPGSRAGIPSFGLGPGSGSRSNRGSGASM, and DPAGSDSGAGLSSSSHVE. Residues 1138-1152 are compositionally biased toward gly residues; the sequence is SGGGGVGGGGRGGGH.

The protein belongs to the protein kinase superfamily. AGC Ser/Thr protein kinase family. PDPK1 subfamily.

The catalysed reaction is L-seryl-[protein] + ATP = O-phospho-L-seryl-[protein] + ADP + H(+). It carries out the reaction L-threonyl-[protein] + ATP = O-phospho-L-threonyl-[protein] + ADP + H(+). In terms of biological role, serine/threonine-protein kinase that functions in the sphingolipid-mediated signaling pathway, regulating organization of the plasma membrane. May phosphorylate PKC1 to activate the cell integrity MAPK cascade during cell wall and membrane stress. May regulate sphingolipid metabolism upstream of YPK1. The chain is Serine/threonine-protein kinase PDK1 from Cryptococcus neoformans var. grubii serotype A (strain H99 / ATCC 208821 / CBS 10515 / FGSC 9487) (Filobasidiella neoformans var. grubii).